A 130-amino-acid polypeptide reads, in one-letter code: Large ribosomal subunit protein bL17 (130 aa).

This sequence belongs to the bacterial ribosomal protein bL17 family. In terms of assembly, part of the 50S ribosomal subunit. Contacts protein L32.

The sequence is that of Large ribosomal subunit protein bL17 from Delftia acidovorans (strain DSM 14801 / SPH-1).